An 882-amino-acid polypeptide reads, in one-letter code: Probable LRR receptor-like serine/threonine-protein kinase At1g12460 (882 aa).

The signal sequence occupies residues 1–21 (MRKVHLFLVLVHFIYISTSRS). Residues 22–515 (DSISERDILL…SRNSDALSIS (494 aa)) are Extracellular-facing. N-linked (GlcNAc...) asparagine glycosylation is present at N76. LRR repeat units follow at residues 92–113 (FIRV…DYFK), 116–138 (TLWT…ISEL), 140–162 (SLRF…LFKF), 165–187 (KTKF…IVNC), 189–210 (NLVG…RICD), 213–235 (VLEY…IQKC), 237–258 (RLIL…AVLT), 261–283 (NITY…VDCS), 285–308 (SLEF…MGCK), 309–331 (SLKL…IGKM), 333–355 (SLSV…IGSL), 357–379 (FLQV…ISNC), 381–404 (VLLE…LNLT), 405–427 (NIKI…LGNL), 429–451 (KVQF…LGSL), and 453–475 (TLTH…PMIQ). N121 carries N-linked (GlcNAc...) asparagine glycosylation. 2 N-linked (GlcNAc...) asparagine glycosylation sites follow: N261 and N266. 2 N-linked (GlcNAc...) asparagine glycosylation sites follow: N321 and N341. N-linked (GlcNAc...) asparagine glycosylation is found at N402, N417, and N426. N458 and N463 each carry an N-linked (GlcNAc...) asparagine glycan. A helical transmembrane segment spans residues 516–536 (VIIVIIAAAVILFGVCIVLAL). Residues 537 to 882 (NLRARKRRKD…LESIRNGFGS (346 aa)) are Cytoplasmic-facing. At T589 the chain carries Phosphothreonine. One can recognise a Protein kinase domain in the interval 593 to 876 (LDKENIIGMG…AEVVQVLESI (284 aa)). ATP-binding positions include 599–607 (IGMGSIGSV) and K621. At Y770 the chain carries Phosphotyrosine.

The protein belongs to the protein kinase superfamily. Ser/Thr protein kinase family.

The protein localises to the cell membrane. It catalyses the reaction L-seryl-[protein] + ATP = O-phospho-L-seryl-[protein] + ADP + H(+). The enzyme catalyses L-threonyl-[protein] + ATP = O-phospho-L-threonyl-[protein] + ADP + H(+). The polypeptide is Probable LRR receptor-like serine/threonine-protein kinase At1g12460 (Arabidopsis thaliana (Mouse-ear cress)).